Here is a 185-residue protein sequence, read N- to C-terminus: Threonylcarbamoyl-AMP synthase (185 aa).

One can recognise a YrdC-like domain in the interval 5-185 (NWRVRLAARI…RDGRTGQRLR (181 aa)).

It belongs to the SUA5 family. TsaC subfamily.

It is found in the cytoplasm. The enzyme catalyses L-threonine + hydrogencarbonate + ATP = L-threonylcarbamoyladenylate + diphosphate + H2O. Its function is as follows. Required for the formation of a threonylcarbamoyl group on adenosine at position 37 (t(6)A37) in tRNAs that read codons beginning with adenine. Catalyzes the conversion of L-threonine, HCO(3)(-)/CO(2) and ATP to give threonylcarbamoyl-AMP (TC-AMP) as the acyladenylate intermediate, with the release of diphosphate. The polypeptide is Threonylcarbamoyl-AMP synthase (Nitrosococcus oceani (strain ATCC 19707 / BCRC 17464 / JCM 30415 / NCIMB 11848 / C-107)).